Consider the following 497-residue polypeptide: Acetyl-coenzyme A carboxylase carboxyl transferase subunit beta, chloroplastic (497 aa).

Residues 230-497 (LWVQCENCYG…FFPLNQNSIK (268 aa)) form the CoA carboxyltransferase N-terminal domain. Residues Cys234, Cys237, Cys253, and Cys256 each coordinate Zn(2+). A C4-type zinc finger spans residues 234–256 (CENCYGLNYKKFLKSKMNICEQC).

It belongs to the AccD/PCCB family. In terms of assembly, acetyl-CoA carboxylase is a heterohexamer composed of biotin carboxyl carrier protein, biotin carboxylase and 2 subunits each of ACCase subunit alpha and ACCase plastid-coded subunit beta (accD). Zn(2+) serves as cofactor.

It localises to the plastid. Its subcellular location is the chloroplast stroma. The catalysed reaction is N(6)-carboxybiotinyl-L-lysyl-[protein] + acetyl-CoA = N(6)-biotinyl-L-lysyl-[protein] + malonyl-CoA. Its pathway is lipid metabolism; malonyl-CoA biosynthesis; malonyl-CoA from acetyl-CoA: step 1/1. Functionally, component of the acetyl coenzyme A carboxylase (ACC) complex. Biotin carboxylase (BC) catalyzes the carboxylation of biotin on its carrier protein (BCCP) and then the CO(2) group is transferred by the transcarboxylase to acetyl-CoA to form malonyl-CoA. The polypeptide is Acetyl-coenzyme A carboxylase carboxyl transferase subunit beta, chloroplastic (Carica papaya (Papaya)).